Reading from the N-terminus, the 539-residue chain is Phosphoenolpyruvate carboxykinase (ATP) (539 aa).

Arg64, Tyr206, and Lys212 together coordinate substrate. ATP contacts are provided by residues Lys212, His231, and 247 to 255 (GLSGTGKTT). The Mn(2+) site is built by Lys212 and His231. Asp268 is a binding site for Mn(2+). Residues Glu296, Arg332, 448-449 (RI), and Thr454 each bind ATP. Arg332 provides a ligand contact to substrate.

The protein belongs to the phosphoenolpyruvate carboxykinase (ATP) family. As to quaternary structure, monomer. It depends on Mn(2+) as a cofactor.

It localises to the cytoplasm. It carries out the reaction oxaloacetate + ATP = phosphoenolpyruvate + ADP + CO2. Its pathway is carbohydrate biosynthesis; gluconeogenesis. Its function is as follows. Involved in the gluconeogenesis. Catalyzes the conversion of oxaloacetate (OAA) to phosphoenolpyruvate (PEP) through direct phosphoryl transfer between the nucleoside triphosphate and OAA. The protein is Phosphoenolpyruvate carboxykinase (ATP) of Erwinia tasmaniensis (strain DSM 17950 / CFBP 7177 / CIP 109463 / NCPPB 4357 / Et1/99).